A 123-amino-acid polypeptide reads, in one-letter code: Protein crumbs homolog 3 (123 aa).

The first 26 residues, M1–G26, serve as a signal peptide directing secretion. At Q27–A59 the chain is on the extracellular side. N36 carries N-linked (GlcNAc...) asparagine glycosylation. The helical transmembrane segment at I60 to L80 threads the bilayer. Residues R81–C120 are Cytoplasmic-facing. The interval R87 to I123 is disordered. A compositionally biased stretch (basic and acidic residues) spans S96 to V117. The PDZ-binding motif lies at G119–I123.

In terms of assembly, component of a complex composed of CRB3, PALS1 and PATJ. Interacts (via C-terminus) with PALS1 (via PDZ domain). Interacts with PARD6A. Interacts (via intracellular domain) with EPB41L5. Interacts with WDR83.

Its subcellular location is the apical cell membrane. The protein localises to the cell junction. The protein resides in the tight junction. Functionally, involved in the establishment of cell polarity in mammalian epithelial cells. Regulates the morphogenesis of tight junctions. Involved in promoting phosphorylation and cytoplasmic retention of transcriptional coactivators YAP1 and WWTR1/TAZ which leads to suppression of TGFB1-dependent transcription of target genes such as CCN2/CTGF, SERPINE1/PAI1, SNAI1/SNAIL1 and SMAD7. The protein is Protein crumbs homolog 3 of Canis lupus familiaris (Dog).